The following is a 161-amino-acid chain: Putative pre-16S rRNA nuclease (161 aa).

Belongs to the YqgF nuclease family.

The protein localises to the cytoplasm. Could be a nuclease involved in processing of the 5'-end of pre-16S rRNA. This is Putative pre-16S rRNA nuclease from Rhodospirillum rubrum (strain ATCC 11170 / ATH 1.1.1 / DSM 467 / LMG 4362 / NCIMB 8255 / S1).